We begin with the raw amino-acid sequence, 258 residues long: UPF0246 protein CKO_03380 (258 aa).

It belongs to the UPF0246 family.

The chain is UPF0246 protein CKO_03380 from Citrobacter koseri (strain ATCC BAA-895 / CDC 4225-83 / SGSC4696).